The chain runs to 232 residues: tRNA (guanine-N(7)-)-methyltransferase (232 aa).

S-adenosyl-L-methionine-binding residues include Glu63, Glu88, Asp115, and Asp137. Asp137 is a catalytic residue. Substrate contacts are provided by residues Lys141, Asp173, and 211 to 214 (TRYE).

This sequence belongs to the class I-like SAM-binding methyltransferase superfamily. TrmB family.

The catalysed reaction is guanosine(46) in tRNA + S-adenosyl-L-methionine = N(7)-methylguanosine(46) in tRNA + S-adenosyl-L-homocysteine. The protein operates within tRNA modification; N(7)-methylguanine-tRNA biosynthesis. Functionally, catalyzes the formation of N(7)-methylguanine at position 46 (m7G46) in tRNA. This Rhizobium meliloti (strain 1021) (Ensifer meliloti) protein is tRNA (guanine-N(7)-)-methyltransferase.